We begin with the raw amino-acid sequence, 384 residues long: Alanine racemase (384 aa).

The active-site Proton acceptor; specific for D-alanine is Lys-39. The residue at position 39 (Lys-39) is an N6-(pyridoxal phosphate)lysine. Position 136 (Arg-136) interacts with substrate. The Proton acceptor; specific for L-alanine role is filled by Tyr-265. Met-312 is a binding site for substrate.

This sequence belongs to the alanine racemase family. The cofactor is pyridoxal 5'-phosphate.

The catalysed reaction is L-alanine = D-alanine. It functions in the pathway amino-acid biosynthesis; D-alanine biosynthesis; D-alanine from L-alanine: step 1/1. Functionally, catalyzes the interconversion of L-alanine and D-alanine. May also act on other amino acids. The polypeptide is Alanine racemase (alr) (Geobacillus kaustophilus (strain HTA426)).